Here is a 262-residue protein sequence, read N- to C-terminus: Inactive snake venom serine proteinase 13 (262 aa).

A signal peptide spans 1 to 18; sequence MGLIRVLANLLILQLSYA. A propeptide spanning residues 19 to 24 is cleaved from the precursor; that stretch reads QKSSEL. In terms of domain architecture, Peptidase S1 spans 25 to 250; that stretch reads VIGGDECNIN…HLDWIQSIIA (226 aa). 6 cysteine pairs are disulfide-bonded: Cys31–Cys162, Cys49–Cys65, Cys97–Cys257, Cys141–Cys211, Cys173–Cys190, and Cys201–Cys226. Residues Asn78, Asn102, and Asn153 are each glycosylated (N-linked (GlcNAc...) asparagine).

This sequence belongs to the peptidase S1 family. Snake venom subfamily. Monomer. As to expression, expressed by the venom gland.

Its subcellular location is the secreted. The protein is Inactive snake venom serine proteinase 13 of Crotalus adamanteus (Eastern diamondback rattlesnake).